Consider the following 599-residue polypeptide: Translation initiation factor IF-2 (599 aa).

One can recognise a tr-type G domain in the interval 111 to 278; it reads PRPPIITVMG…SILLLAEILE (168 aa). Positions 120–127 are G1; the sequence is GHVDHGKT. 120-127 provides a ligand contact to GTP; that stretch reads GHVDHGKT. The G2 stretch occupies residues 145–149; sequence GITQH. Residues 166–169 form a G3 region; the sequence is DTPG. GTP contacts are provided by residues 166–170 and 220–223; these read DTPGH and NKMD. The tract at residues 220-223 is G4; sequence NKMD. Residues 256 to 258 are G5; that stretch reads SAL.

It belongs to the TRAFAC class translation factor GTPase superfamily. Classic translation factor GTPase family. IF-2 subfamily.

The protein localises to the cytoplasm. In terms of biological role, one of the essential components for the initiation of protein synthesis. Protects formylmethionyl-tRNA from spontaneous hydrolysis and promotes its binding to the 30S ribosomal subunits. Also involved in the hydrolysis of GTP during the formation of the 70S ribosomal complex. The polypeptide is Translation initiation factor IF-2 (Mesomycoplasma hyopneumoniae (strain 232) (Mycoplasma hyopneumoniae)).